The following is a 906-amino-acid chain: Cadherin-2 (906 aa).

The signal sequence occupies residues 1–25 (MCRIAGAPRTLLPLLAALLQASVEA). Residues 26–159 (SGEIALCKTG…HSGALQRQKR (134 aa)) constitute a propeptide that is removed on maturation. Cadherin domains follow at residues 160–267 (DWVI…RPEF), 268–382 (LHQV…PPEF), 383–497 (TAMT…NPYF), 498–603 (APNP…DNAP), and 604–717 (QVLP…RIVG). Residues 160–724 (DWVIPPINLP…IVGAGLGTGA (565 aa)) are Extracellular-facing. E170 lines the Ca(2+) pocket. An N-linked (GlcNAc...) asparagine glycan is attached at N190. Residues D226, E228, D259, M260, N261, D262, and N263 each contribute to the Ca(2+) site. N-linked (GlcNAc...) asparagine glycosylation occurs at N273. The Ca(2+) site is built by D293, D295, and N301. Residue N325 is glycosylated (N-linked (GlcNAc...) asparagine). D353 contacts Ca(2+). N-linked (GlcNAc...) asparagine glycans are attached at residues N402, N572, N651, and N692. Residues 725 to 745 (IIAILLCIIILLILVLMFVVW) traverse the membrane as a helical segment. At 746-906 (MKRRDKERQA…LADMYGGGDD (161 aa)) the chain is on the cytoplasmic side. Residues 863 to 880 (SGSTAGSLSSLNSSSSGG) are compositionally biased toward low complexity. Residues 863–883 (SGSTAGSLSSLNSSSSGGDQD) are disordered.

As to quaternary structure, homodimer (via extracellular region). Can also form heterodimers with other cadherins (via extracellular region). Dimerization occurs in trans, i.e. with a cadherin chain from another cell. Interacts with CDCP1. Interacts with PCDH8; this complex may also include TAOK2. The interaction with PCDH8 may lead to internalization through TAOK2/p38 MAPK pathway. Identified in a complex containing FGFR4, NCAM1, CDH2, PLCG1, FRS2, SRC, SHC1, GAP43 and CTTN. May interact with OBSCN (via protein kinase domain 2). Interacts with FBXO45. Post-translationally, cleaved by MMP24. Ectodomain cleavage leads to the generation of a soluble 90 kDa N-terminal soluble fragment and a 45 kDa membrane-bound C-terminal fragment 1 (CTF1), which is further cleaved by gamma-secretase into a 35 kDa. Cleavage in neural stem cells by MMP24 affects CDH2-mediated anchorage of neural stem cells to ependymocytes in the adult subependymal zone, leading to modulate neural stem cell quiescence. May be phosphorylated by OBSCN. In terms of processing, O-glycosylated on Ser and Thr residues. As to expression, expressed in cardiac muscle (at protein level).

Its subcellular location is the cell membrane. The protein resides in the sarcolemma. The protein localises to the cell junction. It localises to the adherens junction. It is found in the desmosome. Its subcellular location is the cell surface. Calcium-dependent cell adhesion protein; preferentially mediates homotypic cell-cell adhesion by dimerization with a CDH2 chain from another cell. Cadherins may thus contribute to the sorting of heterogeneous cell types. Acts as a regulator of neural stem cells quiescence by mediating anchorage of neural stem cells to ependymocytes in the adult subependymal zone: upon cleavage by MMP24, CDH2-mediated anchorage is affected, leading to modulate neural stem cell quiescence. Plays a role in cell-to-cell junction formation between pancreatic beta cells and neural crest stem (NCS) cells, promoting the formation of processes by NCS cells. Required for proper neurite branching. Required for pre- and postsynaptic organization. CDH2 may be involved in neuronal recognition mechanism. In hippocampal neurons, may regulate dendritic spine density. The chain is Cadherin-2 (Cdh2) from Mus musculus (Mouse).